Here is a 300-residue protein sequence, read N- to C-terminus: Ribosomal protein L11 methyltransferase (300 aa).

S-adenosyl-L-methionine contacts are provided by Thr-152, Gly-173, Asp-195, and Asn-234.

Belongs to the methyltransferase superfamily. PrmA family.

It localises to the cytoplasm. The catalysed reaction is L-lysyl-[protein] + 3 S-adenosyl-L-methionine = N(6),N(6),N(6)-trimethyl-L-lysyl-[protein] + 3 S-adenosyl-L-homocysteine + 3 H(+). Methylates ribosomal protein L11. The sequence is that of Ribosomal protein L11 methyltransferase from Burkholderia orbicola (strain MC0-3).